The following is a 151-amino-acid chain: Large ribosomal subunit protein bL9 (151 aa).

This sequence belongs to the bacterial ribosomal protein bL9 family.

Functionally, binds to the 23S rRNA. This chain is Large ribosomal subunit protein bL9, found in Bordetella avium (strain 197N).